The primary structure comprises 373 residues: Dual-specificity RNA methyltransferase RlmN (373 aa).

Glutamate 94 serves as the catalytic Proton acceptor. A Radical SAM core domain is found at 100 to 339 (EEDRATLCVS…VIVRKTRGDD (240 aa)). Cysteine 107 and cysteine 344 form a disulfide bridge. [4Fe-4S] cluster contacts are provided by cysteine 114, cysteine 118, and cysteine 121. Residues 168-169 (GE), serine 200, 222-224 (SIH), and asparagine 301 each bind S-adenosyl-L-methionine. Cysteine 344 acts as the S-methylcysteine intermediate in catalysis.

This sequence belongs to the radical SAM superfamily. RlmN family. Requires [4Fe-4S] cluster as cofactor.

The protein resides in the cytoplasm. It catalyses the reaction adenosine(2503) in 23S rRNA + 2 reduced [2Fe-2S]-[ferredoxin] + 2 S-adenosyl-L-methionine = 2-methyladenosine(2503) in 23S rRNA + 5'-deoxyadenosine + L-methionine + 2 oxidized [2Fe-2S]-[ferredoxin] + S-adenosyl-L-homocysteine. It carries out the reaction adenosine(37) in tRNA + 2 reduced [2Fe-2S]-[ferredoxin] + 2 S-adenosyl-L-methionine = 2-methyladenosine(37) in tRNA + 5'-deoxyadenosine + L-methionine + 2 oxidized [2Fe-2S]-[ferredoxin] + S-adenosyl-L-homocysteine. Its function is as follows. Specifically methylates position 2 of adenine 2503 in 23S rRNA and position 2 of adenine 37 in tRNAs. m2A2503 modification seems to play a crucial role in the proofreading step occurring at the peptidyl transferase center and thus would serve to optimize ribosomal fidelity. This chain is Dual-specificity RNA methyltransferase RlmN, found in Shewanella sediminis (strain HAW-EB3).